The following is a 637-amino-acid chain: DNA gyrase subunit B (637 aa).

Residues 421–535 (SEIYIVEGDS…HGYVYIAQPP (115 aa)) form the Toprim domain. Glu-427, Asp-500, and Asp-502 together coordinate Mg(2+).

This sequence belongs to the type II topoisomerase GyrB family. Heterotetramer, composed of two GyrA and two GyrB chains. In the heterotetramer, GyrA contains the active site tyrosine that forms a transient covalent intermediate with DNA, while GyrB binds cofactors and catalyzes ATP hydrolysis. Requires Mg(2+) as cofactor. Mn(2+) serves as cofactor. The cofactor is Ca(2+).

It is found in the cytoplasm. The catalysed reaction is ATP-dependent breakage, passage and rejoining of double-stranded DNA.. In terms of biological role, a type II topoisomerase that negatively supercoils closed circular double-stranded (ds) DNA in an ATP-dependent manner to modulate DNA topology and maintain chromosomes in an underwound state. Negative supercoiling favors strand separation, and DNA replication, transcription, recombination and repair, all of which involve strand separation. Also able to catalyze the interconversion of other topological isomers of dsDNA rings, including catenanes and knotted rings. Type II topoisomerases break and join 2 DNA strands simultaneously in an ATP-dependent manner. The polypeptide is DNA gyrase subunit B (Halalkalibacterium halodurans (strain ATCC BAA-125 / DSM 18197 / FERM 7344 / JCM 9153 / C-125) (Bacillus halodurans)).